The following is a 143-amino-acid chain: Transcriptional regulator MraZ (143 aa).

SpoVT-AbrB domains follow at residues 6–49 (TYNH…NEAE) and 78–121 (SDET…DLKV).

This sequence belongs to the MraZ family. As to quaternary structure, forms oligomers.

Its subcellular location is the cytoplasm. It localises to the nucleoid. This is Transcriptional regulator MraZ from Spiroplasma kunkelii.